Here is a 46-residue protein sequence, read N- to C-terminus: Large ribosomal subunit protein bL34 (46 aa).

This sequence belongs to the bacterial ribosomal protein bL34 family.

This is Large ribosomal subunit protein bL34 (rpmH) from Mycobacterium avium.